A 312-amino-acid polypeptide reads, in one-letter code: Porphobilinogen deaminase (312 aa).

Residue Cys-241 is modified to S-(dipyrrolylmethanemethyl)cysteine.

The protein belongs to the HMBS family. In terms of assembly, monomer. Dipyrromethane serves as cofactor.

The enzyme catalyses 4 porphobilinogen + H2O = hydroxymethylbilane + 4 NH4(+). It participates in porphyrin-containing compound metabolism; protoporphyrin-IX biosynthesis; coproporphyrinogen-III from 5-aminolevulinate: step 2/4. It functions in the pathway porphyrin-containing compound metabolism; chlorophyll biosynthesis. Tetrapolymerization of the monopyrrole PBG into the hydroxymethylbilane pre-uroporphyrinogen in several discrete steps. The chain is Porphobilinogen deaminase (hemC) from Chlorobaculum parvum (strain DSM 263 / NCIMB 8327) (Chlorobium vibrioforme subsp. thiosulfatophilum).